Reading from the N-terminus, the 775-residue chain is Homoaconitase, mitochondrial (775 aa).

The transit peptide at 1-29 (MQSRLMPSGGPGRRWAFLRVPSTPQRRAF) directs the protein to the mitochondrion. Positions 392, 461, and 464 each coordinate [4Fe-4S] cluster.

The protein belongs to the aconitase/IPM isomerase family. [4Fe-4S] cluster serves as cofactor.

Its subcellular location is the mitochondrion. The catalysed reaction is (2R,3S)-homoisocitrate = cis-homoaconitate + H2O. It participates in amino-acid biosynthesis; L-lysine biosynthesis via AAA pathway; L-alpha-aminoadipate from 2-oxoglutarate: step 3/5. Catalyzes the reversible hydration of cis-homoaconitate to (2R,3S)-homoisocitrate, a step in the alpha-aminoadipate pathway for lysine biosynthesis. The chain is Homoaconitase, mitochondrial (lys4) from Aspergillus oryzae (strain ATCC 42149 / RIB 40) (Yellow koji mold).